The primary structure comprises 254 residues: Ribonuclease 3 (254 aa).

The 131-residue stretch at 24-154 (LRRLQETLGV…VIGALFLDSG (131 aa)) folds into the RNase III domain. Glu67 provides a ligand contact to Mg(2+). The active site involves Asp71. Residues Asp140 and Glu143 each coordinate Mg(2+). Residue Glu143 is part of the active site. In terms of domain architecture, DRBM spans 181–250 (DYKSTLQVLA…ARLAWEQLSG (70 aa)).

This sequence belongs to the ribonuclease III family. Homodimer. The cofactor is Mg(2+).

The protein localises to the cytoplasm. The enzyme catalyses Endonucleolytic cleavage to 5'-phosphomonoester.. Its function is as follows. Digests double-stranded RNA. Involved in the processing of primary rRNA transcript to yield the immediate precursors to the large and small rRNAs (23S and 16S). Processes some mRNAs, and tRNAs when they are encoded in the rRNA operon. Processes pre-crRNA and tracrRNA of type II CRISPR loci if present in the organism. The protein is Ribonuclease 3 of Treponema pallidum (strain Nichols).